Here is a 172-residue protein sequence, read N- to C-terminus: Small ribosomal subunit protein uS5 (172 aa).

The S5 DRBM domain occupies 16 to 79 (LKDRLVAINR…EAAKKNLIRV (64 aa)).

The protein belongs to the universal ribosomal protein uS5 family. In terms of assembly, part of the 30S ribosomal subunit. Contacts proteins S4 and S8.

Functionally, with S4 and S12 plays an important role in translational accuracy. Located at the back of the 30S subunit body where it stabilizes the conformation of the head with respect to the body. The sequence is that of Small ribosomal subunit protein uS5 from Porphyromonas gingivalis (strain ATCC BAA-308 / W83).